Consider the following 350-residue polypeptide: Glycerol-1-phosphate dehydrogenase [NAD(P)+] (350 aa).

NAD(+)-binding positions include 97 to 101 (GSIID) and 119 to 122 (TTAS). Position 124 (aspartate 124) interacts with substrate. Serine 128 contacts NAD(+). Aspartate 171 contributes to the substrate binding site. Residues aspartate 171 and histidine 251 each coordinate Zn(2+). Histidine 255 serves as a coordination point for substrate. Zn(2+) is bound at residue histidine 267.

The protein belongs to the glycerol-1-phosphate dehydrogenase family. Zn(2+) is required as a cofactor.

It is found in the cytoplasm. The catalysed reaction is sn-glycerol 1-phosphate + NAD(+) = dihydroxyacetone phosphate + NADH + H(+). It carries out the reaction sn-glycerol 1-phosphate + NADP(+) = dihydroxyacetone phosphate + NADPH + H(+). It participates in membrane lipid metabolism; glycerophospholipid metabolism. In terms of biological role, catalyzes the NAD(P)H-dependent reduction of dihydroxyacetonephosphate (DHAP or glycerone phosphate) to glycerol 1-phosphate (G1P). The G1P thus generated is used as the glycerophosphate backbone of phospholipids in the cellular membranes of Archaea. The chain is Glycerol-1-phosphate dehydrogenase [NAD(P)+] from Thermococcus sibiricus (strain DSM 12597 / MM 739).